The primary structure comprises 146 residues: Probable gamma-secretase subunit PEN-2 (146 aa).

Positions 1–26 are disordered; the sequence is MEATRSDDPSLNPIRNRNPNPNPNPN. Topologically, residues 1-61 are lumenal; that stretch reads MEATRSDDPS…SVDYARRFYK (61 aa). Positions 9 to 19 are enriched in low complexity; it reads PSLNPIRNRNP. Residues 62–82 traverse the membrane as a helical segment; the sequence is FGFALLPWLWFVNCFYFWPVL. Over 83–98 the chain is Cytoplasmic; it reads RHSRAFPQIRNYVVRS. The helical transmembrane segment at 99–119 threads the bilayer; sequence AIGFSVFTALLSAWALTFSIG. The Lumenal segment spans residues 120–146; that stretch reads GEQLFGPLYDKLVMYNVADRLGLSGLA.

This sequence belongs to the PEN-2 family. As to quaternary structure, probable component of the gamma-secretase complex, a complex composed of a presenilin homodimer, nicastrin, APH1 and PEN2.

The protein localises to the membrane. In terms of biological role, probable subunit of the gamma-secretase complex, an endoprotease complex that catalyzes the intramembrane cleavage of integral membrane proteins such as Notch receptors. The protein is Probable gamma-secretase subunit PEN-2 of Arabidopsis thaliana (Mouse-ear cress).